The primary structure comprises 214 residues: Octanoyltransferase (214 aa).

The BPL/LPL catalytic domain occupies 34–214 (GVQKELVWLL…KFNEIFSNFN (181 aa)). Residues 73-80 (RGGKYTYH), 145-147 (AFG), and 158-160 (GVS) each bind substrate. Cysteine 176 serves as the catalytic Acyl-thioester intermediate.

The protein belongs to the LipB family.

Its subcellular location is the cytoplasm. The catalysed reaction is octanoyl-[ACP] + L-lysyl-[protein] = N(6)-octanoyl-L-lysyl-[protein] + holo-[ACP] + H(+). The protein operates within protein modification; protein lipoylation via endogenous pathway; protein N(6)-(lipoyl)lysine from octanoyl-[acyl-carrier-protein]: step 1/2. Catalyzes the transfer of endogenously produced octanoic acid from octanoyl-acyl-carrier-protein onto the lipoyl domains of lipoate-dependent enzymes. Lipoyl-ACP can also act as a substrate although octanoyl-ACP is likely to be the physiological substrate. In Ehrlichia chaffeensis (strain ATCC CRL-10679 / Arkansas), this protein is Octanoyltransferase.